Consider the following 466-residue polypeptide: Cysteine--tRNA ligase (466 aa).

C29 contacts Zn(2+). Positions 31 to 41 (ATVQAAPHIGH) match the 'HIGH' region motif. Zn(2+) contacts are provided by C208, H233, and E237. The short motif at 264-268 (KMSKS) is the 'KMSKS' region element. K267 serves as a coordination point for ATP.

It belongs to the class-I aminoacyl-tRNA synthetase family. As to quaternary structure, monomer. It depends on Zn(2+) as a cofactor.

The protein resides in the cytoplasm. The enzyme catalyses tRNA(Cys) + L-cysteine + ATP = L-cysteinyl-tRNA(Cys) + AMP + diphosphate. In Streptomyces griseus subsp. griseus (strain JCM 4626 / CBS 651.72 / NBRC 13350 / KCC S-0626 / ISP 5235), this protein is Cysteine--tRNA ligase.